A 666-amino-acid chain; its full sequence is Adenylylsulfate reductase subunit alpha (666 aa).

Residues glycine 32 to glycine 35, aspartate 60 to lysine 61, serine 67 to alanine 69, asparagine 78, isoleucine 193, serine 259, serine 417, alanine 461 to aspartate 462, and serine 472 contribute to the FAD site.

It belongs to the FAD-dependent oxidoreductase 2 family. Heterodimer composed of AprA and AprB. The heterodimers can dimerize to form heterotetramers. FAD is required as a cofactor.

Its subcellular location is the cytoplasm. The enzyme catalyses sulfite + A + AMP + 2 H(+) = adenosine 5'-phosphosulfate + AH2. Functionally, catalytic subunit of the adenylylsulfate reductase which catalyzes reversibly the reduction of adenosine 5'-phosphosulfate (APS) to sulfite and AMP during dissimilatory sulfate reduction. The protein is Adenylylsulfate reductase subunit alpha of Megalodesulfovibrio gigas (strain ATCC 19364 / DSM 1382 / NCIMB 9332 / VKM B-1759) (Desulfovibrio gigas).